A 256-amino-acid chain; its full sequence is DNA repair protein RecO (256 aa).

This sequence belongs to the RecO family.

Involved in DNA repair and RecF pathway recombination. This Streptococcus pneumoniae serotype 19F (strain G54) protein is DNA repair protein RecO.